The following is a 986-amino-acid chain: LRR receptor-like serine/threonine-protein kinase ER2 (986 aa).

The N-terminal stretch at methionine 1–alanine 21 is a signal peptide. The Extracellular portion of the chain corresponds to aspartate 22 to alanine 581. N-linked (GlcNAc...) asparagine glycans are attached at residues asparagine 64 and asparagine 73. LRR repeat units follow at residues alanine 68 to asparagine 89, leucine 90 to cysteine 114, serine 116 to leucine 138, lysine 139 to glutamine 161, leucine 162 to asparagine 186, valine 188 to leucine 210, threonine 211 to asparagine 233, cysteine 234 to glutamine 259, alanine 261 to leucine 280, methionine 281 to asparagine 304, threonine 306 to methionine 329, serine 330 to lysine 352, threonine 354 to cysteine 377, asparagine 379 to leucine 401, glutamate 402 to methionine 425, asparagine 427 to leucine 449, glutamate 450 to asparagine 472, leucine 473 to glutamine 498, leucine 500 to cysteine 520, and phenylalanine 521 to arginine 545. Asparagine 220 and asparagine 233 each carry an N-linked (GlcNAc...) asparagine glycan. Asparagine 269, asparagine 304, and asparagine 328 each carry an N-linked (GlcNAc...) asparagine glycan. Residues asparagine 373, asparagine 391, and asparagine 408 are each glycosylated (N-linked (GlcNAc...) asparagine). Asparagine 456 carries an N-linked (GlcNAc...) asparagine glycan. 3 N-linked (GlcNAc...) asparagine glycosylation sites follow: asparagine 509, asparagine 527, and asparagine 542. The helical transmembrane segment at isoleucine 582–tryptophan 602 threads the bilayer. At proline 603–glutamate 986 the chain is on the cytoplasmic side. Residues leucine 653–leucine 934 enclose the Protein kinase domain. Residues isoleucine 659–valine 667 and lysine 681 each bind ATP. Aspartate 779 serves as the catalytic Proton acceptor.

This sequence belongs to the protein kinase superfamily. Ser/Thr protein kinase family.

The protein resides in the cell membrane. It carries out the reaction L-seryl-[protein] + ATP = O-phospho-L-seryl-[protein] + ADP + H(+). The catalysed reaction is L-threonyl-[protein] + ATP = O-phospho-L-threonyl-[protein] + ADP + H(+). Its function is as follows. Receptor kinase that may be involved in the regulation of cell proliferation and cell growth. This is LRR receptor-like serine/threonine-protein kinase ER2 from Oryza sativa subsp. japonica (Rice).